Consider the following 93-residue polypeptide: DNA-directed RNA polymerase subunit Rpo11 (93 aa).

The protein belongs to the archaeal Rpo11/eukaryotic RPB11/RPC19 RNA polymerase subunit family. Part of the RNA polymerase complex.

The protein resides in the cytoplasm. The catalysed reaction is RNA(n) + a ribonucleoside 5'-triphosphate = RNA(n+1) + diphosphate. DNA-dependent RNA polymerase (RNAP) catalyzes the transcription of DNA into RNA using the four ribonucleoside triphosphates as substrates. This Sulfurisphaera tokodaii (strain DSM 16993 / JCM 10545 / NBRC 100140 / 7) (Sulfolobus tokodaii) protein is DNA-directed RNA polymerase subunit Rpo11.